Reading from the N-terminus, the 684-residue chain is Sec1 family domain-containing protein 2 (684 aa).

It belongs to the STXBP/unc-18/SEC1 family.

Its function is as follows. May be involved in protein transport. This chain is Sec1 family domain-containing protein 2 (Scfd2), found in Mus musculus (Mouse).